The chain runs to 124 residues: Fluoride-specific ion channel FluC (124 aa).

Helical transmembrane passes span 4-24, 35-55, 70-90, and 95-115; these read ILFV…ISIF, FGTL…YALG, VGLL…LLLI, and WLKA…MVYL. Na(+)-binding residues include Gly-74 and Thr-77.

The protein belongs to the fluoride channel Fluc/FEX (TC 1.A.43) family.

The protein resides in the cell inner membrane. It catalyses the reaction fluoride(in) = fluoride(out). Its activity is regulated as follows. Na(+) is not transported, but it plays an essential structural role and its presence is essential for fluoride channel function. In terms of biological role, fluoride-specific ion channel. Important for reducing fluoride concentration in the cell, thus reducing its toxicity. The chain is Fluoride-specific ion channel FluC from Shewanella woodyi (strain ATCC 51908 / MS32).